Reading from the N-terminus, the 91-residue chain is Probable Fe(2+)-trafficking protein (91 aa).

The protein belongs to the Fe(2+)-trafficking protein family. In terms of assembly, monomer.

Functionally, could be a mediator in iron transactions between iron acquisition and iron-requiring processes, such as synthesis and/or repair of Fe-S clusters in biosynthetic enzymes. This chain is Probable Fe(2+)-trafficking protein, found in Citrobacter koseri (strain ATCC BAA-895 / CDC 4225-83 / SGSC4696).